The following is a 55-amino-acid chain: ATP synthase protein 8 (55 aa).

A helical membrane pass occupies residues 7–28 (ISWFFNFLLAWFFLFIVVTILL).

Belongs to the ATPase protein 8 family. As to quaternary structure, F-type ATPases have 2 components, CF(1) - the catalytic core - and CF(0) - the membrane proton channel.

It is found in the mitochondrion membrane. Functionally, mitochondrial membrane ATP synthase (F(1)F(0) ATP synthase or Complex V) produces ATP from ADP in the presence of a proton gradient across the membrane which is generated by electron transport complexes of the respiratory chain. F-type ATPases consist of two structural domains, F(1) - containing the extramembraneous catalytic core and F(0) - containing the membrane proton channel, linked together by a central stalk and a peripheral stalk. During catalysis, ATP synthesis in the catalytic domain of F(1) is coupled via a rotary mechanism of the central stalk subunits to proton translocation. Part of the complex F(0) domain. Minor subunit located with subunit a in the membrane. The polypeptide is ATP synthase protein 8 (MT-ATP8) (Pisaster ochraceus (Ochre sea star)).